The following is a 794-amino-acid chain: Lon protease (794 aa).

The Lon N-terminal domain maps to 13 to 204 (VPLYPLREII…KVYMHLTNEV (192 aa)). ATP is bound at residue 356-363 (GPPGVGKT). Positions 592–773 (KDRVGVATGL…REVFVQALNP (182 aa)) constitute a Lon proteolytic domain. Residues serine 679 and lysine 722 contribute to the active site. The segment covering 774 to 788 (TSPAPTAATSARTPA) has biased composition (low complexity). Residues 774 to 794 (TSPAPTAATSARTPAGAPPPQ) are disordered.

It belongs to the peptidase S16 family. Homohexamer. Organized in a ring with a central cavity.

The protein localises to the cytoplasm. It catalyses the reaction Hydrolysis of proteins in presence of ATP.. In terms of biological role, ATP-dependent serine protease that mediates the selective degradation of mutant and abnormal proteins as well as certain short-lived regulatory proteins. Required for cellular homeostasis and for survival from DNA damage and developmental changes induced by stress. Degrades polypeptides processively to yield small peptide fragments that are 5 to 10 amino acids long. Binds to DNA in a double-stranded, site-specific manner. This chain is Lon protease, found in Citrifermentans bemidjiense (strain ATCC BAA-1014 / DSM 16622 / JCM 12645 / Bem) (Geobacter bemidjiensis).